The sequence spans 367 residues: Gelsolin-like protein 1 (367 aa).

The interval methionine 1–glutamate 185 is actin binding. Gelsolin-like repeat units follow at residues asparagine 56 to arginine 141 and glutamine 179 to glutamine 225. Residues aspartate 106–glycine 109 form an actin-actin interfilament contact point region. Positions valine 186–alanine 295 are actin binding, Actin-severing. The interval proline 235 to leucine 257 is disordered. A Gelsolin-like 3 repeat occupies lysine 287 to glycine 322. The interval valine 296–alanine 366 is actin-severing, Ca-sensitive.

This sequence belongs to the villin/gelsolin family. As to quaternary structure, interacts with actin monomers and filaments. Expressed in circular and longitudinal muscle, pseudohearts, pharynx and gizzard. Also expressed in male germ cells at the proximal pole of primary spermatocytes in 16 cell-stage morulae, and in the distal parts of the spermatocytes in 32 and 64 cell-stage morulae. In the spermatids of the 128 cell-stage morulae it is expressed at the proximal pole of the elongated nucleus and the distal pole near the base of the flagellae.

The protein resides in the cytoplasm. It is found in the cytoskeleton. Calcium-regulated protein that binds to the plus (or barbed) ends of actin monomers or filaments, preventing monomer exchange (end-blocking or capping). Can promote the assembly of monomers into filaments (nucleation) as well as sever existing filaments. The sequence is that of Gelsolin-like protein 1 from Lumbricus terrestris (Common earthworm).